A 79-amino-acid polypeptide reads, in one-letter code: Putative defensin-like protein 203 (79 aa).

Residues Met1 to Ala27 form the signal peptide. Intrachain disulfides connect Cys30–Cys79, Cys40–Cys64, Cys49–Cys73, and Cys53–Cys75.

This sequence belongs to the DEFL family.

Its subcellular location is the secreted. The polypeptide is Putative defensin-like protein 203 (Arabidopsis thaliana (Mouse-ear cress)).